We begin with the raw amino-acid sequence, 832 residues long: Protein monoglycylase TTLL8 (832 aa).

Over residues 1-13 (MSCPPTPNPPFRP) the composition is skewed to pro residues. 2 disordered regions span residues 1 to 84 (MSCP…QDLS) and 277 to 304 (GKSKKEEAKNSDPSPKKDPENPDLKLPS). 3 stretches are compositionally biased toward basic and acidic residues: residues 46 to 59 (QLREASMENGERKK), 66 to 75 (DGDHKEENKL), and 280 to 299 (KKEEAKNSDPSPKKDPENPD). Residues 271–624 (YCSKVKGKSK…RKLDRNCDIG (354 aa)) enclose the TTL domain. ATP contacts are provided by residues Lys-397, 403-404 (RG), 435-438 (QKYI), 448-450 (KFD), and 492-493 (CN). Arg-403 contributes to the a protein binding site. Ser-495 lines the L-glutamate pocket. The Mg(2+) site is built by Asp-570, Glu-583, and Asn-585. Residue Glu-583 coordinates ATP.

Requires Mg(2+) as cofactor. In terms of tissue distribution, highly expressed in testis. Expressed in brain, heart, kidney, liver, lung, muscle, spleen and trachea. Expressed in sperm flagellum. In the brain, specifically expressed in ependymal cilia.

It is found in the cytoplasm. It localises to the cytoskeleton. The protein resides in the cell projection. The protein localises to the cilium. Its subcellular location is the cilium axoneme. It is found in the flagellum axoneme. It catalyses the reaction L-glutamyl-[protein] + glycine + ATP = glycyl-L-glutamyl-[protein] + ADP + phosphate + H(+). Functionally, monoglycylase which modifies both tubulin and non-tubulin proteins, adding a single glycine on the gamma-carboxyl groups of specific glutamate residues to generate monoglycine side chains within the C-terminal tail of target proteins. Not involved in elongation step of the polyglycylation reaction. Preferentially monoglycylates alpha-tubulin over beta-tubulin. Together with TTLL3, mediates microtubule glycylation of primary and motile cilia, which is essential for their stability and maintenance. Together with TTLL3, glycylates sperm flagella which regulates axonemal dynein motor activity, thereby controlling flagellar beat, directional sperm swimming and male fertility. Monoglycylates non-tubulin proteins such as ANP32A, ANP32B, SET, NCL and NAP1. This is Protein monoglycylase TTLL8 from Mus musculus (Mouse).